We begin with the raw amino-acid sequence, 373 residues long: Ubiquitin domain-containing protein DSK2 (373 aa).

A Ubiquitin-like domain is found at M1 to K76. Glycyl lysine isopeptide (Lys-Gly) (interchain with G-Cter in ubiquitin) cross-links involve residues K13 and K76. The tract at residues D221–A270 is disordered. The segment covering G231–A270 has biased composition (low complexity). The region spanning P327–G371 is the UBA domain.

It localises to the nucleus. Functionally, involved, with RAD23 in spindle pole body duplication. Involved in the ubiquitin-proteasome proteolytic pathway. The protein is Ubiquitin domain-containing protein DSK2 (DSK2) of Saccharomyces cerevisiae (strain ATCC 204508 / S288c) (Baker's yeast).